The following is a 469-amino-acid chain: Ribulose bisphosphate carboxylase large chain (469 aa).

Lys-5 carries the post-translational modification N6,N6,N6-trimethyllysine. Residues Asn-114 and Thr-164 each contribute to the substrate site. Lys-166 acts as the Proton acceptor in catalysis. A substrate-binding site is contributed by Lys-168. Residues Lys-192, Asp-194, and Glu-195 each coordinate Mg(2+). Residue Lys-192 is modified to N6-carboxylysine. His-285 acts as the Proton acceptor in catalysis. Substrate-binding residues include Arg-286, His-318, and Ser-370.

It belongs to the RuBisCO large chain family. Type I subfamily. As to quaternary structure, heterohexadecamer of 8 large chains and 8 small chains; disulfide-linked. The disulfide link is formed within the large subunit homodimers. The cofactor is Mg(2+). Post-translationally, the disulfide bond which can form in the large chain dimeric partners within the hexadecamer appears to be associated with oxidative stress and protein turnover.

The protein resides in the plastid. Its subcellular location is the chloroplast. It carries out the reaction 2 (2R)-3-phosphoglycerate + 2 H(+) = D-ribulose 1,5-bisphosphate + CO2 + H2O. It catalyses the reaction D-ribulose 1,5-bisphosphate + O2 = 2-phosphoglycolate + (2R)-3-phosphoglycerate + 2 H(+). RuBisCO catalyzes two reactions: the carboxylation of D-ribulose 1,5-bisphosphate, the primary event in carbon dioxide fixation, as well as the oxidative fragmentation of the pentose substrate in the photorespiration process. Both reactions occur simultaneously and in competition at the same active site. This is Ribulose bisphosphate carboxylase large chain from Fleroya rubrostipulata (Mitragyna rubrostipulata).